The primary structure comprises 451 residues: Phosphoglucosamine mutase (451 aa).

Ser-107 acts as the Phosphoserine intermediate in catalysis. Ser-107, Asp-246, Asp-248, and Asp-250 together coordinate Mg(2+). Ser-107 is subject to Phosphoserine.

This sequence belongs to the phosphohexose mutase family. Mg(2+) serves as cofactor. Post-translationally, activated by phosphorylation.

It carries out the reaction alpha-D-glucosamine 1-phosphate = D-glucosamine 6-phosphate. Functionally, catalyzes the conversion of glucosamine-6-phosphate to glucosamine-1-phosphate. The protein is Phosphoglucosamine mutase of Burkholderia multivorans (strain ATCC 17616 / 249).